Reading from the N-terminus, the 217-residue chain is Oxygen-evolving enhancer protein 3, chloroplastic (217 aa).

2 disordered regions span residues 1-25 (MAQA…RRAG) and 73-95 (PIKL…SDQA). A chloroplast-targeting transit peptide spans 1–63 (MAQAMASMTG…ATGIAGGALA (63 aa)).

This sequence belongs to the PsbQ family.

It localises to the plastid. The protein localises to the chloroplast thylakoid membrane. The sequence is that of Oxygen-evolving enhancer protein 3, chloroplastic from Oryza sativa subsp. indica (Rice).